Reading from the N-terminus, the 266-residue chain is Outer kinetochore KNL1 complex subunit ZWINT (266 aa).

Positions Asp95 to Lys115 are disordered. Positions Asp105–Lys115 are enriched in basic and acidic residues. A coiled-coil region spans residues Leu136–Leu237. 2 positions are modified to phosphoserine: Ser232 and Ser265.

In terms of assembly, component of the KNL1 complex composed of KNL1 and ZWINT. Part of the ten-subunit outer kinetochore KMN network that includes the KNL1, MIS12 and NDC80 complexes; a bioriented kinetochore contains approximately 150 copies of the network. Interacts with the MIS12 complex subunits MIS12 DSN1, and PMF1. Interacts with the NDC80 complex subunit NDC80 during mitosis. Interacts with ZW10. Interacts with CETN3. Expressed abundantly in brain and at lower levels in testis and kidney.

The protein resides in the nucleus. The protein localises to the chromosome. Its subcellular location is the centromere. It is found in the kinetochore. Its function is as follows. Acts as a component of the outer kinetochore KNL1 complex that serves as a docking point for spindle assembly checkpoint components and mediates microtubule-kinetochore interactions. Kinetochores, consisting of a centromere-associated inner segment and a microtubule-contacting outer segment, play a crucial role in chromosome segregation by mediating the physical connection between centromeric DNA and spindle microtubules. The outer kinetochore is made up of the ten-subunit KMN network, comprising the MIS12, NDC80 and KNL1 complexes, and auxiliary microtubule-associated components; together they connect the outer kinetochore with the inner kinetochore, bind microtubules, and mediate interactions with mitotic checkpoint proteins that delay anaphase until chromosomes are bioriented on the spindle. Targets the RZZ complex to the kinetochore at prometaphase. Recruits MAD2L1 to the kinetochore, but is not required for BUB1B localization. In addition to orienting mitotic chromosomes, it is also essential for alignment of homologous chromosomes during meiotic metaphase I. In meiosis I, required to activate the spindle assembly checkpoint at unattached kinetochores to correct erroneous kinetochore-microtubule attachments. In Rattus norvegicus (Rat), this protein is Outer kinetochore KNL1 complex subunit ZWINT (Zwint).